The chain runs to 91 residues: Gem-associated protein 7 homolog (91 aa).

In terms of domain architecture, Sm spans 18 to 86; that stretch reads LKFYQKMASA…VVGIEYNLVQ (69 aa).

Belongs to the gemin-7 family. Part of the core SMN complex at least composed of smn1, yip11/gem2, gem6, gem7 and gem8. Interacts with gem6; the interaction is direct. Interacts with gem8; the interaction is direct.

In Schizosaccharomyces pombe (strain 972 / ATCC 24843) (Fission yeast), this protein is Gem-associated protein 7 homolog.